The sequence spans 90 residues: MVSLDPEKKNEIIKEFQIHENDTGSVEVQIALLTARIKHLTEHLRKHPKDFHSRRGLMKMIGRRRKMLKYLRHKKPEVYRELIAKLGIRK.

The protein belongs to the universal ribosomal protein uS15 family. Part of the 30S ribosomal subunit. Forms a bridge to the 50S subunit in the 70S ribosome, contacting the 23S rRNA.

In terms of biological role, one of the primary rRNA binding proteins, it binds directly to 16S rRNA where it helps nucleate assembly of the platform of the 30S subunit by binding and bridging several RNA helices of the 16S rRNA. Functionally, forms an intersubunit bridge (bridge B4) with the 23S rRNA of the 50S subunit in the ribosome. The protein is Small ribosomal subunit protein uS15 of Thermotoga maritima (strain ATCC 43589 / DSM 3109 / JCM 10099 / NBRC 100826 / MSB8).